The primary structure comprises 859 residues: DNA mismatch repair protein MutS (859 aa).

615–622 (GPNMGGKS) serves as a coordination point for ATP.

This sequence belongs to the DNA mismatch repair MutS family.

Functionally, this protein is involved in the repair of mismatches in DNA. It is possible that it carries out the mismatch recognition step. This protein has a weak ATPase activity. The polypeptide is DNA mismatch repair protein MutS (Chromohalobacter salexigens (strain ATCC BAA-138 / DSM 3043 / CIP 106854 / NCIMB 13768 / 1H11)).